Consider the following 273-residue polypeptide: Undecaprenyl-diphosphatase (273 aa).

The next 9 helical transmembrane spans lie at 1 to 21, 39 to 59, 63 to 83, 92 to 112, 118 to 138, 165 to 185, 195 to 215, 225 to 245, and 252 to 272; these read MEPI…FLPV, PALF…LIVF, LGMM…GIAP, LKLA…GLGL, LFFS…LLWL, GLAV…GLFL, FSFL…AVDL, ATVL…KVLI, and RFYL…WIGM.

The protein belongs to the UppP family.

The protein resides in the cell inner membrane. It catalyses the reaction di-trans,octa-cis-undecaprenyl diphosphate + H2O = di-trans,octa-cis-undecaprenyl phosphate + phosphate + H(+). In terms of biological role, catalyzes the dephosphorylation of undecaprenyl diphosphate (UPP). Confers resistance to bacitracin. The sequence is that of Undecaprenyl-diphosphatase from Desulfosudis oleivorans (strain DSM 6200 / JCM 39069 / Hxd3) (Desulfococcus oleovorans).